Reading from the N-terminus, the 298-residue chain is Release factor glutamine methyltransferase (298 aa).

S-adenosyl-L-methionine-binding positions include Gly-131–Gly-135, Asp-162, Trp-189, and Asn-205. Asn-205–Tyr-208 provides a ligand contact to substrate.

The protein belongs to the protein N5-glutamine methyltransferase family. PrmC subfamily.

It carries out the reaction L-glutaminyl-[peptide chain release factor] + S-adenosyl-L-methionine = N(5)-methyl-L-glutaminyl-[peptide chain release factor] + S-adenosyl-L-homocysteine + H(+). In terms of biological role, methylates the class 1 translation termination release factors RF1/PrfA and RF2/PrfB on the glutamine residue of the universally conserved GGQ motif. The chain is Release factor glutamine methyltransferase from Pasteurella multocida (strain Pm70).